The following is a 98-amino-acid chain: NADH-ubiquinone oxidoreductase chain 4L (98 aa).

The next 3 membrane-spanning stretches (helical) occupy residues 1 to 21, 30 to 50, and 61 to 81; these read MSLT…GLLM, LLCL…TILI, and IILL…LVAV.

Belongs to the complex I subunit 4L family. Core subunit of respiratory chain NADH dehydrogenase (Complex I) which is composed of 45 different subunits.

It is found in the mitochondrion inner membrane. It carries out the reaction a ubiquinone + NADH + 5 H(+)(in) = a ubiquinol + NAD(+) + 4 H(+)(out). Its function is as follows. Core subunit of the mitochondrial membrane respiratory chain NADH dehydrogenase (Complex I) which catalyzes electron transfer from NADH through the respiratory chain, using ubiquinone as an electron acceptor. Part of the enzyme membrane arm which is embedded in the lipid bilayer and involved in proton translocation. The chain is NADH-ubiquinone oxidoreductase chain 4L (MT-ND4L) from Pipistrellus abramus (Japanese pipistrelle).